The following is a 285-amino-acid chain: Acetyl-coenzyme A carboxylase carboxyl transferase subunit beta (285 aa).

The region spanning 29 to 285 is the CoA carboxyltransferase N-terminal domain; that stretch reads IMTKCPKCKK…ILKIHQEVTK (257 aa). Positions 33, 36, 52, and 55 each coordinate Zn(2+). The C4-type zinc-finger motif lies at 33–55; the sequence is CPKCKKIMYTKELAENLNVCFNC.

Belongs to the AccD/PCCB family. As to quaternary structure, acetyl-CoA carboxylase is a heterohexamer composed of biotin carboxyl carrier protein (AccB), biotin carboxylase (AccC) and two subunits each of ACCase subunit alpha (AccA) and ACCase subunit beta (AccD). Requires Zn(2+) as cofactor.

Its subcellular location is the cytoplasm. It carries out the reaction N(6)-carboxybiotinyl-L-lysyl-[protein] + acetyl-CoA = N(6)-biotinyl-L-lysyl-[protein] + malonyl-CoA. The protein operates within lipid metabolism; malonyl-CoA biosynthesis; malonyl-CoA from acetyl-CoA: step 1/1. Component of the acetyl coenzyme A carboxylase (ACC) complex. Biotin carboxylase (BC) catalyzes the carboxylation of biotin on its carrier protein (BCCP) and then the CO(2) group is transferred by the transcarboxylase to acetyl-CoA to form malonyl-CoA. In Staphylococcus aureus (strain Mu3 / ATCC 700698), this protein is Acetyl-coenzyme A carboxylase carboxyl transferase subunit beta.